The chain runs to 204 residues: Guanylate kinase (204 aa).

A Guanylate kinase-like domain is found at 6 to 184 (GLLIVLSGPA…AVDRIKAIVT (179 aa)). 13–20 (GPAGVGKG) serves as a coordination point for ATP.

Belongs to the guanylate kinase family.

The protein resides in the cytoplasm. It catalyses the reaction GMP + ATP = GDP + ADP. In terms of biological role, essential for recycling GMP and indirectly, cGMP. This Halalkalibacterium halodurans (strain ATCC BAA-125 / DSM 18197 / FERM 7344 / JCM 9153 / C-125) (Bacillus halodurans) protein is Guanylate kinase (gmk).